We begin with the raw amino-acid sequence, 219 residues long: N-(5'-phosphoribosyl)anthranilate isomerase (219 aa).

Belongs to the TrpF family.

The catalysed reaction is N-(5-phospho-beta-D-ribosyl)anthranilate = 1-(2-carboxyphenylamino)-1-deoxy-D-ribulose 5-phosphate. It functions in the pathway amino-acid biosynthesis; L-tryptophan biosynthesis; L-tryptophan from chorismate: step 3/5. The sequence is that of N-(5'-phosphoribosyl)anthranilate isomerase from Mesorhizobium japonicum (strain LMG 29417 / CECT 9101 / MAFF 303099) (Mesorhizobium loti (strain MAFF 303099)).